A 952-amino-acid chain; its full sequence is Valine--tRNA ligase (952 aa).

Residues 45–55 (PNVTGSLHMGH) carry the 'HIGH' region motif. A 'KMSKS' region motif is present at residues 571 to 575 (KMSKS). ATP is bound at residue Lys-574. Positions 894–950 (KEIAKADADIARVDLKLADQNFIANAPGEIVEDEKEKREAAAARKAKFVEALERLKA) form a coiled coil.

Belongs to the class-I aminoacyl-tRNA synthetase family. ValS type 1 subfamily. In terms of assembly, monomer.

It is found in the cytoplasm. It carries out the reaction tRNA(Val) + L-valine + ATP = L-valyl-tRNA(Val) + AMP + diphosphate. Its function is as follows. Catalyzes the attachment of valine to tRNA(Val). As ValRS can inadvertently accommodate and process structurally similar amino acids such as threonine, to avoid such errors, it has a 'posttransfer' editing activity that hydrolyzes mischarged Thr-tRNA(Val) in a tRNA-dependent manner. In Nitrobacter winogradskyi (strain ATCC 25391 / DSM 10237 / CIP 104748 / NCIMB 11846 / Nb-255), this protein is Valine--tRNA ligase.